The primary structure comprises 478 residues: Protein nucleotidyltransferase YdiU (478 aa).

ATP is bound by residues Gly-83, Gly-85, Arg-86, Lys-106, Asp-118, Gly-119, Arg-169, and Arg-176. The Proton acceptor role is filled by Asp-245. Residues Asn-246 and Asp-255 each contribute to the Mg(2+) site. Asp-255 provides a ligand contact to ATP.

It belongs to the SELO family. Mg(2+) serves as cofactor. It depends on Mn(2+) as a cofactor.

The enzyme catalyses L-seryl-[protein] + ATP = 3-O-(5'-adenylyl)-L-seryl-[protein] + diphosphate. It catalyses the reaction L-threonyl-[protein] + ATP = 3-O-(5'-adenylyl)-L-threonyl-[protein] + diphosphate. The catalysed reaction is L-tyrosyl-[protein] + ATP = O-(5'-adenylyl)-L-tyrosyl-[protein] + diphosphate. It carries out the reaction L-histidyl-[protein] + UTP = N(tele)-(5'-uridylyl)-L-histidyl-[protein] + diphosphate. The enzyme catalyses L-seryl-[protein] + UTP = O-(5'-uridylyl)-L-seryl-[protein] + diphosphate. It catalyses the reaction L-tyrosyl-[protein] + UTP = O-(5'-uridylyl)-L-tyrosyl-[protein] + diphosphate. Its function is as follows. Nucleotidyltransferase involved in the post-translational modification of proteins. It can catalyze the addition of adenosine monophosphate (AMP) or uridine monophosphate (UMP) to a protein, resulting in modifications known as AMPylation and UMPylation. This chain is Protein nucleotidyltransferase YdiU, found in Exiguobacterium sp. (strain ATCC BAA-1283 / AT1b).